Here is a 396-residue protein sequence, read N- to C-terminus: Queuine tRNA-ribosyltransferase catalytic subunit 1 (396 aa).

D99 serves as the catalytic Proton acceptor. Queuine contacts are provided by residues 99-103 (DSGGF), D153, Q196, and G223. The interval 254–260 (GVGYATD) is RNA binding. The active-site Nucleophile is D273. The interval 278 to 282 (TRTAR) is RNA binding; important for wobble base 34 recognition. Zn(2+)-binding residues include C311, C313, C316, and H341.

The protein belongs to the queuine tRNA-ribosyltransferase family. In terms of assembly, heterodimer of a catalytic subunit qtrt1 and an accessory subunit qtrt2. Zn(2+) serves as cofactor.

The protein localises to the cytoplasm. Its subcellular location is the mitochondrion outer membrane. The catalysed reaction is guanosine(34) in tRNA + queuine = queuosine(34) in tRNA + guanine. Its function is as follows. Catalytic subunit of the queuine tRNA-ribosyltransferase (TGT) that catalyzes the base-exchange of a guanine (G) residue with queuine (Q) at position 34 (anticodon wobble position) in tRNAs with GU(N) anticodons (tRNA-Asp, -Asn, -His and -Tyr), resulting in the hypermodified nucleoside queuosine (7-(((4,5-cis-dihydroxy-2-cyclopenten-1-yl)amino)methyl)-7-deazaguanosine). Catalysis occurs through a double-displacement mechanism. The nucleophile active site attacks the C1' of nucleotide 34 to detach the guanine base from the RNA, forming a covalent enzyme-RNA intermediate. The proton acceptor active site deprotonates the incoming queuine, allowing a nucleophilic attack on the C1' of the ribose to form the product. The chain is Queuine tRNA-ribosyltransferase catalytic subunit 1 from Xenopus laevis (African clawed frog).